The chain runs to 273 residues: Putative phosphoenolpyruvate synthase regulatory protein (273 aa).

153–160 (GVSRSGKT) lines the ADP pocket.

The protein belongs to the pyruvate, phosphate/water dikinase regulatory protein family. PSRP subfamily.

It catalyses the reaction [pyruvate, water dikinase] + ADP = [pyruvate, water dikinase]-phosphate + AMP + H(+). It carries out the reaction [pyruvate, water dikinase]-phosphate + phosphate + H(+) = [pyruvate, water dikinase] + diphosphate. In terms of biological role, bifunctional serine/threonine kinase and phosphorylase involved in the regulation of the phosphoenolpyruvate synthase (PEPS) by catalyzing its phosphorylation/dephosphorylation. This chain is Putative phosphoenolpyruvate synthase regulatory protein, found in Delftia acidovorans (strain DSM 14801 / SPH-1).